A 429-amino-acid chain; its full sequence is UPF0242 protein CT_616 (429 aa).

It belongs to the UPF0242 family.

This Chlamydia trachomatis serovar D (strain ATCC VR-885 / DSM 19411 / UW-3/Cx) protein is UPF0242 protein CT_616.